A 343-amino-acid chain; its full sequence is Holliday junction branch migration complex subunit RuvB (343 aa).

Residues 4–184 (SDRLISAKAG…FGIVQRLEFY (181 aa)) are large ATPase domain (RuvB-L). ATP-binding positions include I23, R24, G65, K68, T69, T70, 131 to 133 (EDY), R174, Y184, and R221. T69 provides a ligand contact to Mg(2+). Residues 185–255 (NHQDLTHIIT…IADQALNMLK (71 aa)) form a small ATPAse domain (RuvB-S) region. The tract at residues 258 to 343 (SQGFDHMDRR…RSGREDDLFE (86 aa)) is head domain (RuvB-H). 3 residues coordinate DNA: R294, R313, and R318.

This sequence belongs to the RuvB family. Homohexamer. Forms an RuvA(8)-RuvB(12)-Holliday junction (HJ) complex. HJ DNA is sandwiched between 2 RuvA tetramers; dsDNA enters through RuvA and exits via RuvB. An RuvB hexamer assembles on each DNA strand where it exits the tetramer. Each RuvB hexamer is contacted by two RuvA subunits (via domain III) on 2 adjacent RuvB subunits; this complex drives branch migration. In the full resolvosome a probable DNA-RuvA(4)-RuvB(12)-RuvC(2) complex forms which resolves the HJ.

It localises to the cytoplasm. It carries out the reaction ATP + H2O = ADP + phosphate + H(+). In terms of biological role, the RuvA-RuvB-RuvC complex processes Holliday junction (HJ) DNA during genetic recombination and DNA repair, while the RuvA-RuvB complex plays an important role in the rescue of blocked DNA replication forks via replication fork reversal (RFR). RuvA specifically binds to HJ cruciform DNA, conferring on it an open structure. The RuvB hexamer acts as an ATP-dependent pump, pulling dsDNA into and through the RuvAB complex. RuvB forms 2 homohexamers on either side of HJ DNA bound by 1 or 2 RuvA tetramers; 4 subunits per hexamer contact DNA at a time. Coordinated motions by a converter formed by DNA-disengaged RuvB subunits stimulates ATP hydrolysis and nucleotide exchange. Immobilization of the converter enables RuvB to convert the ATP-contained energy into a lever motion, pulling 2 nucleotides of DNA out of the RuvA tetramer per ATP hydrolyzed, thus driving DNA branch migration. The RuvB motors rotate together with the DNA substrate, which together with the progressing nucleotide cycle form the mechanistic basis for DNA recombination by continuous HJ branch migration. Branch migration allows RuvC to scan DNA until it finds its consensus sequence, where it cleaves and resolves cruciform DNA. This is Holliday junction branch migration complex subunit RuvB from Marinobacter nauticus (strain ATCC 700491 / DSM 11845 / VT8) (Marinobacter aquaeolei).